The primary structure comprises 214 residues: Phosphatidylcholine transfer protein (214 aa).

M1 is modified (N-acetylmethionine). Positions 1–212 constitute an START domain; the sequence is MAGAACCFSD…MVKACQNYHK (212 aa). 2 residues coordinate a 1,2-diacyl-sn-glycero-3-phosphocholine: Y72 and R78. A Phosphoserine modification is found at S139. An a 1,2-diacyl-sn-glycero-3-phosphocholine-binding site is contributed by Q157.

As to quaternary structure, interacts with ACOT13/THEM2. As to expression, abundant in liver of pups but levels in liver decrease 10-fold about 2 weeks after birth. In adult, highly expressed in epididymis, testis, kidney and bone-marrow derived mast cells.

The protein localises to the cytoplasm. Functionally, catalyzes the transfer of phosphatidylcholine between membranes. Binds a single lipid molecule. This is Phosphatidylcholine transfer protein (Pctp) from Mus musculus (Mouse).